Here is a 943-residue protein sequence, read N- to C-terminus: Neutral alpha-glucosidase AB (943 aa).

The signal sequence occupies residues 1 to 23 (MRKLVILIILSIVCSLFIGSIES). The interval 186–231 (FEPISDKPQPLPPKEKKSEEENKEANQEEDNNNNNNDNNEEQQVST) is disordered. The span at 198–211 (PKEKKSEEENKEAN) shows a compositional bias: basic and acidic residues. Residue aspartate 540 is the Nucleophile of the active site. The active site involves glutamate 543. Catalysis depends on aspartate 617, which acts as the Proton donor. N-linked (GlcNAc...) asparagine glycans are attached at residues asparagine 878, asparagine 887, and asparagine 907.

Belongs to the glycosyl hydrolase 31 family.

It localises to the endoplasmic reticulum. Its subcellular location is the golgi apparatus. It catalyses the reaction N(4)-(alpha-D-Glc-(1-&gt;3)-alpha-D-Man-(1-&gt;2)-alpha-D-Man-(1-&gt;2)-alpha-D-Man-(1-&gt;3)-[alpha-D-Man-(1-&gt;2)-alpha-D-Man-(1-&gt;3)-[alpha-D-Man-(1-&gt;2)-alpha-D-Man-(1-&gt;6)]-alpha-D-Man-(1-&gt;6)]-beta-D-Man-(1-&gt;4)-beta-D-GlcNAc-(1-&gt;4)-beta-D-GlcNAc)-L-asparaginyl-[protein] + H2O = N(4)-(alpha-D-Man-(1-&gt;2)-alpha-D-Man-(1-&gt;2)-alpha-D-Man-(1-&gt;3)-[alpha-D-Man-(1-&gt;2)-alpha-D-Man-(1-&gt;3)-[alpha-D-Man-(1-&gt;2)-alpha-D-Man-(1-&gt;6)]-alpha-D-Man-(1-&gt;6)]-beta-D-Man-(1-&gt;4)-beta-D-GlcNAc-(1-&gt;4)-beta-D-GlcNAc)-L-asparaginyl-[protein] (N-glucan mannose isomer 9A1,2,3B1,2,3) + beta-D-glucose. It carries out the reaction N(4)-(alpha-D-Glc-(1-&gt;3)-alpha-D-Glc-(1-&gt;3)-alpha-D-Man-(1-&gt;2)-alpha-D-Man-(1-&gt;2)-alpha-D-Man-(1-&gt;3)-[alpha-D-Man-(1-&gt;2)-alpha-D-Man-(1-&gt;3)-[alpha-D-Man-(1-&gt;2)-alpha-D-Man-(1-&gt;6)]-alpha-D-Man-(1-&gt;6)]-beta-D-Man-(1-&gt;4)-beta-D-GlcNAc-(1-&gt;4)-beta-D-GlcNAc)-L-asparaginyl-[protein] + H2O = N(4)-(alpha-D-Glc-(1-&gt;3)-alpha-D-Man-(1-&gt;2)-alpha-D-Man-(1-&gt;2)-alpha-D-Man-(1-&gt;3)-[alpha-D-Man-(1-&gt;2)-alpha-D-Man-(1-&gt;3)-[alpha-D-Man-(1-&gt;2)-alpha-D-Man-(1-&gt;6)]-alpha-D-Man-(1-&gt;6)]-beta-D-Man-(1-&gt;4)-beta-D-GlcNAc-(1-&gt;4)-beta-D-GlcNAc)-L-asparaginyl-[protein] + beta-D-glucose. Its pathway is glycan metabolism; N-glycan metabolism. Functionally, cleaves sequentially the 2 innermost alpha-1,3-linked glucose residues from N-linked oligosaccharides on newly synthesized glycoproteins. The sequence is that of Neutral alpha-glucosidase AB (modA) from Dictyostelium discoideum (Social amoeba).